A 1765-amino-acid chain; its full sequence is RANBP2-like and GRIP domain-containing protein 8 (1765 aa).

The residue at position 19 (Thr-19) is a Phosphothreonine. Phosphoserine is present on Ser-21. TPR repeat units lie at residues 26–59 (SMKGFYFAKLYYEAKEYDLAKKYICTYINVQERD), 60–93 (PKAHRFLGLLYELEENTEKAVECYRRSVELNPTQ), and 648–681 (EDAHITFAILDAVNGNIEDAVTAFESIKSVVSYW). A disordered region spans residues 760–804 (GPLYKNGSLRNADSEIKHSTPSPTKYSLSPSKSYKYSPETPPRWT). Positions 778 to 797 (STPSPTKYSLSPSKSYKYSP) are enriched in low complexity. A RanBD1 1 domain is found at 1036-1172 (HFEPVVQMPE…FEECQRLLLD (137 aa)). Disordered regions lie at residues 1216 to 1247 (TEEENKGSGTGVAGASDTTIKPNAENTGPTLE) and 1306 to 1330 (AKLNQSGTSVGTDEESVVTQEEERD). Polar residues predominate over residues 1231–1244 (SDTTIKPNAENTGP). Residues 1317–1329 (TDEESVVTQEEER) show a composition bias toward acidic residues. The RanBD1 2 domain occupies 1333–1469 (YFEPVVPLPD…FDEAKTAQEK (137 aa)). Positions 1580 to 1593 (NNSETSSVAQSGSE) are enriched in polar residues. Disordered stretches follow at residues 1580–1621 (NNSE…KNLS) and 1746–1765 (KGKLAAVAQDEEENPSRSSG). The span at 1594-1617 (SKVEPKKCELSKNSDIEQSSDSKV) shows a compositional bias: basic and acidic residues. Positions 1702–1752 (REKSAANLEYLKNVLLQFIFLKPGSERERLLPVINTMLQLSPEEKGKLAAV) constitute a GRIP domain.

In terms of assembly, interacts with GTP-bound ARL1.

The protein is RANBP2-like and GRIP domain-containing protein 8 (RGPD8) of Homo sapiens (Human).